Consider the following 141-residue polypeptide: Hemoglobin subunit alpha (141 aa).

Positions 1-141 (VLSPADKTNV…VSTVLTSKYR (141 aa)) constitute a Globin domain. Ser3 is modified (phosphoserine). Lys7 carries the post-translational modification N6-succinyllysine. Thr8 carries the post-translational modification Phosphothreonine. An N6-succinyllysine modification is found at Lys11. An N6-acetyllysine; alternate modification is found at Lys16. Lys16 carries the N6-succinyllysine; alternate modification. Tyr24 bears the Phosphotyrosine mark. Position 40 is an N6-succinyllysine (Lys40). Ser49 is subject to Phosphoserine. His58 provides a ligand contact to O2. His87 is a heme b binding site. Ser102 is modified (phosphoserine). At Thr108 the chain carries Phosphothreonine. At Ser124 the chain carries Phosphoserine. Phosphothreonine is present on residues Thr134 and Thr137. Ser138 carries the post-translational modification Phosphoserine.

It belongs to the globin family. As to quaternary structure, heterotetramer of two alpha chains and two beta chains. Red blood cells.

Involved in oxygen transport from the lung to the various peripheral tissues. In terms of biological role, hemopressin acts as an antagonist peptide of the cannabinoid receptor CNR1. Hemopressin-binding efficiently blocks cannabinoid receptor CNR1 and subsequent signaling. The sequence is that of Hemoglobin subunit alpha (HBA) from Phoca vitulina (Harbor seal).